The following is a 643-amino-acid chain: Inorganic pyrophosphatase TTM1 (643 aa).

The transit peptide at 1 to 15 directs the protein to the mitochondrion; sequence MALDSSVALSPRRRH. In terms of domain architecture, CYTH spans 248–410; it reads NPTYILKSSK…PHTYIEQIQL (163 aa). A helical transmembrane segment spans residues 618–638; that stretch reads LESSTVPILLGLAIGCVGIFA.

Requires Mg(2+) as cofactor. As to expression, ubiquitously expressed in all tissues, with strong expression detected in senescent leaves.

It is found in the mitochondrion outer membrane. It carries out the reaction diphosphate + H2O = 2 phosphate + H(+). In terms of biological role, exhibits pyrophosphatase activity with stronger affinity for pyrophosphate (PPi), moderate affinity for ATP and ADP, and weak affinity for tripolyphosphate (PPPi). No activity observed toward uridine substrate. Positively regulates natural and dark-induced leaf senescence. This chain is Inorganic pyrophosphatase TTM1, found in Arabidopsis thaliana (Mouse-ear cress).